Reading from the N-terminus, the 175-residue chain is uncharacterized protein (175 aa).

Residues 107 to 138 (KTEEEAEKTLQEIERKIFKKLWENLDKERKRE) are a coiled coil.

This is an uncharacterized protein from Aquifex aeolicus (strain VF5).